Reading from the N-terminus, the 166-residue chain is Regulatory protein RecX (166 aa).

This sequence belongs to the RecX family.

It localises to the cytoplasm. In terms of biological role, modulates RecA activity. The sequence is that of Regulatory protein RecX from Escherichia coli (strain SE11).